Here is a 20-residue protein sequence, read N- to C-terminus: Collagenolytic protease 36 kDa A (20 aa).

Positions 1 to 20 constitute a Peptidase S1 domain; that stretch reads IVGGTEVTPGEIPYQLSLQD. Residues 1 to 20 are disordered; it reads IVGGTEVTPGEIPYQLSLQD.

The protein belongs to the peptidase S1 family.

It carries out the reaction Hydrolysis of proteins, with broad specificity for peptide bonds. Native collagen is cleaved about 75% of the length of the molecule from the N-terminus. Low activity on small molecule substrates of both trypsin and chymotrypsin.. This enzyme is a serine protease capable of degrading the native triple helix of collagen. This chain is Collagenolytic protease 36 kDa A, found in Paralithodes camtschaticus (Red king crab).